The primary structure comprises 340 residues: Leucine-rich repeat-containing protein 23 (340 aa).

Over residues 1-27 (MSDEDDVDDVDAEQDEVESDKEIEEWE) the composition is skewed to acidic residues. Residues 1 to 38 (MSDEDDVDDVDAEQDEVESDKEIEEWEDYRKETEEASE) are disordered. LRR repeat units follow at residues 89-110 (HLRYVDISENHITDISPLNSLT), 111-134 (HLLWLKADGNQLRSARMNELPYLQ), 177-197 (SLHTLELRGNQLESTKGIYLP), 198-219 (KLKNLYLAQNLLKKVEGLENLS), 220-241 (NLTTLHLRDNQIETLNGFSQEM), and 243-264 (SLQYLNLRSNMISDLAELAKLR). The segment at 205–340 (AQNLLKKVEG…QDMEPYLPPV (136 aa)) is interaction with RSPH9. Positions 277–315 (NPCADETDYRQEALVQMAHLERLDKEFYEDDDRAEAEEI) constitute an LRRCT domain. The stretch at 305 to 328 (EDDDRAEAEEIRQRLKEEQDQDLD) forms a coiled coil. A disordered region spans residues 317–340 (QRLKEEQDQDLDPDQDMEPYLPPV). The span at 323–333 (QDQDLDPDQDM) shows a compositional bias: acidic residues.

In terms of assembly, component of the axonemal radial spoke complex. Interacts with RSPH3A and RSPH3B. Interacts with RSPH9. As to expression, expressed in the testis (at protein level).

It localises to the cytoplasm. The protein resides in the cytoskeleton. It is found in the flagellum axoneme. Functionally, essential for sperm motility and male fertility. Plays an important role in the proper assembly of the third radial spoke (RS3) head and the bridge structure between RS2 and RS3 in the sperm flagella. This is Leucine-rich repeat-containing protein 23 (Lrrc23) from Mus musculus (Mouse).